Reading from the N-terminus, the 619-residue chain is 1-deoxy-D-xylulose-5-phosphate synthase (619 aa).

Thiamine diphosphate contacts are provided by residues His-80 and 121–123 (GHS). Asp-152 contacts Mg(2+). Residues 153-154 (GA), Asn-181, Tyr-288, and Glu-370 each bind thiamine diphosphate. A Mg(2+)-binding site is contributed by Asn-181.

It belongs to the transketolase family. DXPS subfamily. As to quaternary structure, homodimer. Mg(2+) serves as cofactor. It depends on thiamine diphosphate as a cofactor.

The enzyme catalyses D-glyceraldehyde 3-phosphate + pyruvate + H(+) = 1-deoxy-D-xylulose 5-phosphate + CO2. It participates in metabolic intermediate biosynthesis; 1-deoxy-D-xylulose 5-phosphate biosynthesis; 1-deoxy-D-xylulose 5-phosphate from D-glyceraldehyde 3-phosphate and pyruvate: step 1/1. In terms of biological role, catalyzes the acyloin condensation reaction between C atoms 2 and 3 of pyruvate and glyceraldehyde 3-phosphate to yield 1-deoxy-D-xylulose-5-phosphate (DXP). In Yersinia pestis (strain Pestoides F), this protein is 1-deoxy-D-xylulose-5-phosphate synthase.